A 131-amino-acid chain; its full sequence is Small ribosomal subunit protein bS6 (131 aa).

The interval 98–131 (EASPMVKAKDERRERRDDFANETADDSDAGDSEE) is disordered. Residues 104–116 (KAKDERRERRDDF) are compositionally biased toward basic and acidic residues. Positions 120–131 (TADDSDAGDSEE) are enriched in acidic residues.

It belongs to the bacterial ribosomal protein bS6 family.

Functionally, binds together with bS18 to 16S ribosomal RNA. The polypeptide is Small ribosomal subunit protein bS6 (Enterobacter sp. (strain 638)).